The following is a 149-amino-acid chain: D-aminoacyl-tRNA deacylase (149 aa).

Positions 137-138 match the Gly-cisPro motif, important for rejection of L-amino acids motif; that stretch reads GP.

It belongs to the DTD family. As to quaternary structure, homodimer.

The protein resides in the cytoplasm. It catalyses the reaction glycyl-tRNA(Ala) + H2O = tRNA(Ala) + glycine + H(+). The enzyme catalyses a D-aminoacyl-tRNA + H2O = a tRNA + a D-alpha-amino acid + H(+). An aminoacyl-tRNA editing enzyme that deacylates mischarged D-aminoacyl-tRNAs. Also deacylates mischarged glycyl-tRNA(Ala), protecting cells against glycine mischarging by AlaRS. Acts via tRNA-based rather than protein-based catalysis; rejects L-amino acids rather than detecting D-amino acids in the active site. By recycling D-aminoacyl-tRNA to D-amino acids and free tRNA molecules, this enzyme counteracts the toxicity associated with the formation of D-aminoacyl-tRNA entities in vivo and helps enforce protein L-homochirality. The sequence is that of D-aminoacyl-tRNA deacylase from Clostridium botulinum (strain Eklund 17B / Type B).